The sequence spans 119 residues: Large ribosomal subunit protein bL20 (119 aa).

This sequence belongs to the bacterial ribosomal protein bL20 family.

In terms of biological role, binds directly to 23S ribosomal RNA and is necessary for the in vitro assembly process of the 50S ribosomal subunit. It is not involved in the protein synthesizing functions of that subunit. This Gluconacetobacter diazotrophicus (strain ATCC 49037 / DSM 5601 / CCUG 37298 / CIP 103539 / LMG 7603 / PAl5) protein is Large ribosomal subunit protein bL20.